The primary structure comprises 707 residues: Polyribonucleotide nucleotidyltransferase (707 aa).

Aspartate 485 and aspartate 491 together coordinate Mg(2+). The region spanning 552–611 is the KH domain; it reads PRIHTMKINSDKIKDVIGKGGAVIRALTEETGTTIEIEDDGTIKIAATEGAAAKEAIRRI. The S1 motif domain maps to 621–689; the sequence is GRIYTGKVMR…RQGRIRLSMK (69 aa).

Belongs to the polyribonucleotide nucleotidyltransferase family. In terms of assembly, component of the RNA degradosome, which is a multiprotein complex involved in RNA processing and mRNA degradation. The cofactor is Mg(2+).

It localises to the cytoplasm. The enzyme catalyses RNA(n+1) + phosphate = RNA(n) + a ribonucleoside 5'-diphosphate. Functionally, involved in mRNA degradation. Catalyzes the phosphorolysis of single-stranded polyribonucleotides processively in the 3'- to 5'-direction. The protein is Polyribonucleotide nucleotidyltransferase of Photobacterium profundum (strain SS9).